The primary structure comprises 154 residues: Aspartate carbamoyltransferase regulatory chain (154 aa).

Zn(2+) is bound by residues C109, C114, C138, and C141.

The protein belongs to the PyrI family. Contains catalytic and regulatory chains. The cofactor is Zn(2+).

Involved in allosteric regulation of aspartate carbamoyltransferase. In Aliivibrio salmonicida (strain LFI1238) (Vibrio salmonicida (strain LFI1238)), this protein is Aspartate carbamoyltransferase regulatory chain.